A 421-amino-acid polypeptide reads, in one-letter code: Peroxisomal succinyl-coenzyme A thioesterase (421 aa).

Catalysis depends on serine 232, which acts as the Charge relay system. Lysine 313 carries the post-translational modification N6-succinyllysine. Catalysis depends on charge relay system residues aspartate 326 and histidine 360. Residues 419-421 (CRL) carry the Microbody targeting signal motif.

The protein belongs to the C/M/P thioester hydrolase family. In terms of tissue distribution, mainly expressed in liver and kidney. Weakly expressed in other tissues including intestine, adrenal gland and adipose tissues.

Its subcellular location is the peroxisome. It catalyses the reaction succinyl-CoA + H2O = succinate + CoA + H(+). The catalysed reaction is glutaryl-CoA + H2O = glutarate + CoA + H(+). It participates in lipid metabolism; fatty acid metabolism. Catalyzes the hydrolysis of acyl-CoAs into free fatty acids and coenzyme A (CoASH), regulating their respective intracellular levels. In contrast to its human ortholog, functions essentially as a succinyl-CoA thioesterase with no activity with medium to long chain saturated acyl-CoAs and with a low activity toward glutaryl-CoA. This chain is Peroxisomal succinyl-coenzyme A thioesterase (Acot4), found in Mus musculus (Mouse).